Reading from the N-terminus, the 198-residue chain is DNA polymerase zeta subunit 2 (198 aa).

In terms of domain architecture, HORMA spans 4–196 (EIKADIIVEA…DLGLKMDVLI (193 aa)).

Belongs to the MAD2 family. As to quaternary structure, accessory subunit of the zeta DNA polymerase complex, which consists of the catalytic component PolZ1/DNApol-zeta and PolZ2/Rev7. Interacts with the apurinic/apyrimidinic (AP) endonuclease Rrp1 (via the N-terminus).

In terms of biological role, as the accessory component of the DNA polymerase zeta complex, involved in translesion DNA synthesis (TLS) and various DNA repair mechanisms. Promotes the apurinic/apyrimidinic (AP) endonuclease activity of Rrp1 and is therefore likely to be involved in the base excision repair (BER) pathway responsible for repair of DNA lesions. It does not appear to influence the synthesis activity of the catalytic component Dmpol-zeta. This chain is DNA polymerase zeta subunit 2, found in Drosophila melanogaster (Fruit fly).